The chain runs to 634 residues: ATP-dependent zinc metalloprotease FtsH (634 aa).

The Cytoplasmic portion of the chain corresponds to 1-5 (MNALK). The helical transmembrane segment at 6-26 (NFFIWAIIIGAAIVAFNLFEG) threads the bilayer. At 27–100 (KREFTTKVSL…VANPEPPGGW (74 aa)) the chain is on the periplasmic side. The helical transmembrane segment at 101-121 (LVNVFLSWLPILFFIGIWIFL) threads the bilayer. Topologically, residues 122–634 (LRQMSGGGNV…KSEEVKEEVV (513 aa)) are cytoplasmic. 195-202 (GEPGVGKT) serves as a coordination point for ATP. Zn(2+) is bound at residue His-418. Glu-419 is a catalytic residue. Positions 422 and 496 each coordinate Zn(2+). The disordered stretch occupies residues 615–634 (DRKSEENKELKSEEVKEEVV).

It in the central section; belongs to the AAA ATPase family. In the C-terminal section; belongs to the peptidase M41 family. In terms of assembly, the isolated protease domain (residues 405-634) forms a stable hexamer. Requires Zn(2+) as cofactor.

Its subcellular location is the cell inner membrane. In terms of biological role, acts as a processive, ATP-dependent zinc metallopeptidase for both cytoplasmic and membrane proteins. Plays a role in the quality control of integral membrane proteins. The sequence is that of ATP-dependent zinc metalloprotease FtsH from Aquifex aeolicus (strain VF5).